Consider the following 317-residue polypeptide: Acetyl-coenzyme A carboxylase carboxyl transferase subunit alpha (317 aa).

The CoA carboxyltransferase C-terminal domain occupies 40 to 294 (RLQKKSEELT…KARLLTDLED (255 aa)).

This sequence belongs to the AccA family. As to quaternary structure, acetyl-CoA carboxylase is a heterohexamer composed of biotin carboxyl carrier protein (AccB), biotin carboxylase (AccC) and two subunits each of ACCase subunit alpha (AccA) and ACCase subunit beta (AccD).

It localises to the cytoplasm. The enzyme catalyses N(6)-carboxybiotinyl-L-lysyl-[protein] + acetyl-CoA = N(6)-biotinyl-L-lysyl-[protein] + malonyl-CoA. Its pathway is lipid metabolism; malonyl-CoA biosynthesis; malonyl-CoA from acetyl-CoA: step 1/1. Its function is as follows. Component of the acetyl coenzyme A carboxylase (ACC) complex. First, biotin carboxylase catalyzes the carboxylation of biotin on its carrier protein (BCCP) and then the CO(2) group is transferred by the carboxyltransferase to acetyl-CoA to form malonyl-CoA. The polypeptide is Acetyl-coenzyme A carboxylase carboxyl transferase subunit alpha (Actinobacillus succinogenes (strain ATCC 55618 / DSM 22257 / CCUG 43843 / 130Z)).